The primary structure comprises 438 residues: 2-(3-amino-3-carboxypropyl)histidine synthase subunit 1 (438 aa).

The disordered stretch occupies residues 7–29 (SGAAEQGGRDGPGRGRAPRGRVA). The [4Fe-4S] cluster site is built by C110, C214, and C342. Positions 391–421 (VNHGQDRRPHAPGRPARGKVQEGSARPPSAV) are disordered.

Belongs to the DPH1/DPH2 family. DPH1 subfamily. As to quaternary structure, component of the 2-(3-amino-3-carboxypropyl)histidine synthase complex composed of DPH1, DPH2, DPH3 and a NADH-dependent reductase. Interacts with DPH2. Interacts with RBM8A. It depends on [4Fe-4S] cluster as a cofactor. As to expression, expressed in heart, brain, placenta, lung, liver, skeletal muscle, kidney, pancreas, spleen, thymus, mammary gland, colon, small intestine, testis and ovary. Reduced expression in primary breast and ovarian tumors.

It localises to the nucleus. Its subcellular location is the cytoplasm. It carries out the reaction L-histidyl-[translation elongation factor 2] + S-adenosyl-L-methionine = 2-[(3S)-amino-3-carboxypropyl]-L-histidyl-[translation elongation factor 2] + S-methyl-5'-thioadenosine + H(+). The protein operates within protein modification; peptidyl-diphthamide biosynthesis. In terms of biological role, catalyzes the first step of diphthamide biosynthesis, a post-translational modification of histidine which occurs in elongation factor 2. DPH1 and DPH2 transfer a 3-amino-3-carboxypropyl (ACP) group from S-adenosyl-L-methionine (SAM) to a histidine residue, the reaction is assisted by a reduction system comprising DPH3 and a NADH-dependent reductase. Acts as a tumor suppressor. The chain is 2-(3-amino-3-carboxypropyl)histidine synthase subunit 1 from Homo sapiens (Human).